The following is a 119-amino-acid chain: Large ribosomal subunit protein eL31y (119 aa).

This sequence belongs to the eukaryotic ribosomal protein eL31 family.

The sequence is that of Large ribosomal subunit protein eL31y (RPL31B) from Arabidopsis thaliana (Mouse-ear cress).